Consider the following 293-residue polypeptide: Protein phosphatase 1 regulatory subunit 3B (293 aa).

Residues 129–237 form the CBM21 domain; the sequence is RQRIENDHVC…NNQGKNYRII (109 aa).

In terms of assembly, interacts with glycogen, PPP1CC catalytic subunit of PP1 and PYGL. Associates with glycogen particles. Forms complexes with debranching enzyme, glycogen phosphorylase, glycogen synthase and phosphorylase kinase which is necessary for its regulation of PP1 activity.

Acts as a glycogen-targeting subunit for phosphatase PP1. Facilitates interaction of the PP1 with enzymes of the glycogen metabolism and regulates its activity. Suppresses the rate at which PP1 dephosphorylates (inactivates) glycogen phosphorylase and enhances the rate at which it activates glycogen synthase and therefore limits glycogen breakdown. This Danio rerio (Zebrafish) protein is Protein phosphatase 1 regulatory subunit 3B (ppp1r3b).